We begin with the raw amino-acid sequence, 207 residues long: Octanoyltransferase (207 aa).

The BPL/LPL catalytic domain occupies 29-204 (AETRDELWVV…HLERHLSTSK (176 aa)). Residues 68–75 (RGGQITYH), 135–137 (SLG), and 148–150 (GLS) each bind substrate. Cys-166 functions as the Acyl-thioester intermediate in the catalytic mechanism.

This sequence belongs to the LipB family.

It is found in the cytoplasm. The catalysed reaction is octanoyl-[ACP] + L-lysyl-[protein] = N(6)-octanoyl-L-lysyl-[protein] + holo-[ACP] + H(+). Its pathway is protein modification; protein lipoylation via endogenous pathway; protein N(6)-(lipoyl)lysine from octanoyl-[acyl-carrier-protein]: step 1/2. Its function is as follows. Catalyzes the transfer of endogenously produced octanoic acid from octanoyl-acyl-carrier-protein onto the lipoyl domains of lipoate-dependent enzymes. Lipoyl-ACP can also act as a substrate although octanoyl-ACP is likely to be the physiological substrate. The chain is Octanoyltransferase from Chromobacterium violaceum (strain ATCC 12472 / DSM 30191 / JCM 1249 / CCUG 213 / NBRC 12614 / NCIMB 9131 / NCTC 9757 / MK).